Consider the following 467-residue polypeptide: 3-isopropylmalate dehydratase large subunit (467 aa).

Residues Cys-347, Cys-407, and Cys-410 each contribute to the [4Fe-4S] cluster site.

This sequence belongs to the aconitase/IPM isomerase family. LeuC type 1 subfamily. In terms of assembly, heterodimer of LeuC and LeuD. The cofactor is [4Fe-4S] cluster.

The enzyme catalyses (2R,3S)-3-isopropylmalate = (2S)-2-isopropylmalate. Its pathway is amino-acid biosynthesis; L-leucine biosynthesis; L-leucine from 3-methyl-2-oxobutanoate: step 2/4. Its function is as follows. Catalyzes the isomerization between 2-isopropylmalate and 3-isopropylmalate, via the formation of 2-isopropylmaleate. This Pelagibacter ubique (strain HTCC1062) protein is 3-isopropylmalate dehydratase large subunit.